Here is a 1467-residue protein sequence, read N- to C-terminus: Neuropathy target esterase sws (1467 aa).

At 1 to 34 (MDVLEMLRASASGSYNTIFSDAWCQYVSKQITAT) the chain is on the lumenal side. Residues 35 to 55 (MYMYCAFGLMGVLFLAWFMYF) traverse the membrane as a helical segment. Topologically, residues 56–1467 (KRLARLRLRD…RSSTYNETKN (1412 aa)) are cytoplasmic. 174-301 (IFGHFEKPIF…IRVIQVIMIR (128 aa)) lines the a nucleoside 3',5'-cyclic phosphate pocket. Disordered regions lie at residues 332–353 (TMSG…ANGP) and 372–416 (MGMG…SVHG). Positions 339–350 (SQTSQSSRQATA) are enriched in low complexity. Phosphoserine occurs at positions 450 and 459. Residues 488-615 (ELGL…VVRR) and 604-731 (IVLD…LSHR) each bind a nucleoside 3',5'-cyclic phosphate. The PNPLA domain occupies 958–1124 (LVLGGGGARG…VNNLPGHLWR (167 aa)). The GXGXXG signature appears at 962–967 (GGGARG). The short motif at 989-993 (GVSIG) is the GXSXG element. Ser991 (nucleophile) is an active-site residue. Asp1111 (proton acceptor) is an active-site residue. The DGA/G motif lies at 1111–1113 (DGG). Ser1205 carries the post-translational modification Phosphoserine. The interval 1377-1467 (RKMDKSTQST…RSSTYNETKN (91 aa)) is disordered. Over residues 1382 to 1393 (STQSTPPTSSRA) the composition is skewed to polar residues. Basic and acidic residues-rich tracts occupy residues 1396–1406 (RGKEEARHMDN) and 1448–1458 (LADKDEDKENR).

It belongs to the NTE family. As to quaternary structure, interacts with Pka-C3; interaction inhibits the catalytic function of Pka-C3 and the esterase activity of sws.

Its subcellular location is the endoplasmic reticulum membrane. The catalysed reaction is a 1-acyl-sn-glycero-3-phosphocholine + H2O = sn-glycerol 3-phosphocholine + a fatty acid + H(+). Its function is as follows. Phospholipase B that deacylates intracellular phosphatidylcholine (PtdCho), generating glycerophosphocholine (GroPtdCho). This deacylation occurs at both sn-2 and sn-1 positions of PtdCho. Its specific chemical modification by certain organophosphorus (OP) compounds leads to distal axonopathy. Plays a role in the signaling mechanism between neurons and glia that regulates glia wrapping during development of the adult brain. Essential for membrane lipid homeostasis and cell survival in both neurons and glia of the adult brain. This is Neuropathy target esterase sws from Drosophila yakuba (Fruit fly).